The chain runs to 209 residues: uncharacterized protein (209 aa).

This is an uncharacterized protein from Arabidopsis thaliana (Mouse-ear cress).